The sequence spans 371 residues: Maltose/maltodextrin import ATP-binding protein MalK (371 aa).

In terms of domain architecture, ABC transporter spans 4–234; that stretch reads VTLKNVCKAY…PENRFVAGFI (231 aa). 36-43 is a binding site for ATP; sequence GPSGCGKS.

It belongs to the ABC transporter superfamily. Maltooligosaccharide importer (TC 3.A.1.1.1) family. In terms of assembly, the complex is composed of two ATP-binding proteins (MalK), two transmembrane proteins (MalG and MalK) and a solute-binding protein (MalE).

It localises to the cell inner membrane. The enzyme catalyses D-maltose(out) + ATP + H2O = D-maltose(in) + ADP + phosphate + H(+). Functionally, part of the ABC transporter complex MalEFGK involved in maltose/maltodextrin import. Responsible for energy coupling to the transport system. This is Maltose/maltodextrin import ATP-binding protein MalK from Vibrio vulnificus (strain CMCP6).